The primary structure comprises 229 residues: Uracil-DNA glycosylase (229 aa).

The Proton acceptor role is filled by Asp71.

The protein belongs to the uracil-DNA glycosylase (UDG) superfamily. UNG family.

It localises to the cytoplasm. It catalyses the reaction Hydrolyzes single-stranded DNA or mismatched double-stranded DNA and polynucleotides, releasing free uracil.. Functionally, excises uracil residues from the DNA which can arise as a result of misincorporation of dUMP residues by DNA polymerase or due to deamination of cytosine. In Campylobacter lari (strain RM2100 / D67 / ATCC BAA-1060), this protein is Uracil-DNA glycosylase.